Here is a 264-residue protein sequence, read N- to C-terminus: Ferric siderophore reductase (264 aa).

The FAD-binding FR-type domain occupies 9–127 (SPTRLTYISD…PGPLKMNRFD (119 aa)). FAD-binding residues include Arg73, Ser74, Thr76, Asp90, Val92, His96, Ala100, Thr101, Lys247, Asn249, Thr250, and Ala252.

This sequence belongs to the SIP oxidoreductase family. FAD serves as cofactor.

Its function is as follows. Ferric-siderophore reductase involved in iron removal from the siderophores after their transport into the cell. Catalyzes the reduction of the ferric iron bound to the hydroxamate siderophores produced by Shewanella to ferrous iron. Can use a ferredoxin as electron donor. Despite the clear evidence for the interaction with NAD(P)H, no direct reduction of the enzyme by these compounds is observed, nor consumption of NAD(P)H, suggesting that NADH and NADPH are not the physiological electron donors. This is Ferric siderophore reductase from Shewanella frigidimarina (strain NCIMB 400).